The sequence spans 548 residues: Transcriptional adapter ADA2a (548 aa).

The interval methionine 1–glutamate 30 is disordered. The ZZ-type zinc-finger motif lies at proline 48–phenylalanine 104. Positions 53, 56, 68, 71, 77, 80, 90, and 94 each coordinate Zn(2+). Residues leucine 106 to proline 158 enclose the SANT domain. Lysine 257 carries the post-translational modification N6-acetyllysine; by GCN5. A coiled-coil region spans residues glutamine 365–arginine 386. Residues proline 461–threonine 548 form the SWIRM domain.

Interacts in vitro with the HAT domain of GCN5 and with the DNA-binding domain of the transcriptional activator DREB1B/CBF1. Acetylated in vitro by GCN5, but acetylation is not essential for biological activity. In terms of tissue distribution, expressed in roots and leaves.

The protein localises to the nucleus. Required for the function of some acidic activation domains, which activate transcription from a distant site. The exact mechanism of action is not yet known. ADA2 stimulates the acetyltransferase activity of GCN5 on free histones or nucleosomes, probably by opening up the promoter region. The protein is Transcriptional adapter ADA2a (ADA2A) of Arabidopsis thaliana (Mouse-ear cress).